Reading from the N-terminus, the 199-residue chain is Peptidyl-tRNA hydrolase (199 aa).

Tyr-25 serves as a coordination point for tRNA. His-30 serves as the catalytic Proton acceptor. Tyr-76, Asn-78, and Asn-124 together coordinate tRNA.

Belongs to the PTH family. Monomer.

It is found in the cytoplasm. The catalysed reaction is an N-acyl-L-alpha-aminoacyl-tRNA + H2O = an N-acyl-L-amino acid + a tRNA + H(+). In terms of biological role, hydrolyzes ribosome-free peptidyl-tRNAs (with 1 or more amino acids incorporated), which drop off the ribosome during protein synthesis, or as a result of ribosome stalling. Its function is as follows. Catalyzes the release of premature peptidyl moieties from peptidyl-tRNA molecules trapped in stalled 50S ribosomal subunits, and thus maintains levels of free tRNAs and 50S ribosomes. The polypeptide is Peptidyl-tRNA hydrolase (Mycobacterium leprae (strain Br4923)).